Consider the following 451-residue polypeptide: UPF0210 protein NMA1908 (451 aa).

Belongs to the UPF0210 family. As to quaternary structure, homodimer.

This Neisseria meningitidis serogroup A / serotype 4A (strain DSM 15465 / Z2491) protein is UPF0210 protein NMA1908.